The following is a 248-amino-acid chain: UPF0736 protein BCAH187_A1335 (248 aa).

It belongs to the UPF0736 family.

The protein is UPF0736 protein BCAH187_A1335 of Bacillus cereus (strain AH187).